Reading from the N-terminus, the 492-residue chain is Probable glycine dehydrogenase (decarboxylating) subunit 2 (492 aa).

Residue lysine 274 is modified to N6-(pyridoxal phosphate)lysine.

Belongs to the GcvP family. C-terminal subunit subfamily. As to quaternary structure, the glycine cleavage system is composed of four proteins: P, T, L and H. In this organism, the P 'protein' is a heterodimer of two subunits. The cofactor is pyridoxal 5'-phosphate.

The enzyme catalyses N(6)-[(R)-lipoyl]-L-lysyl-[glycine-cleavage complex H protein] + glycine + H(+) = N(6)-[(R)-S(8)-aminomethyldihydrolipoyl]-L-lysyl-[glycine-cleavage complex H protein] + CO2. The glycine cleavage system catalyzes the degradation of glycine. The P protein binds the alpha-amino group of glycine through its pyridoxal phosphate cofactor; CO(2) is released and the remaining methylamine moiety is then transferred to the lipoamide cofactor of the H protein. In Staphylococcus haemolyticus (strain JCSC1435), this protein is Probable glycine dehydrogenase (decarboxylating) subunit 2.